We begin with the raw amino-acid sequence, 440 residues long: Gap junction alpha-8 protein (440 aa).

An intramembrane segment occupies 2–12 (GDWSFLGNILE). At 13-21 (EVNEHSTVI) the chain is on the cytoplasmic side. The chain crosses the membrane as a helical span at residues 22–42 (GRVWLTVLFIFRILILGTAAE). At 43–71 (FVWGDEQSDFVCNTQQPGCENVCYDEAFP) the chain is on the extracellular side. 3 cysteine pairs are disulfide-bonded: C54–C201, C61–C195, and C65–C190. Residues 72–92 (ISHIRLWVLQIIFVSTPSLVY) traverse the membrane as a helical segment. Residues 93–161 (VGHAVHHVRM…GTLLRTYVCH (69 aa)) are Cytoplasmic-facing. The tract at residues 108 to 144 (EREAEELSQQSPGNGGERAPLAADQGSVKKSSSSSKG) is disordered. Residues 162–182 (IIFKTLFEVGFIVGHYFLYGF) form a helical membrane-spanning segment. The Extracellular portion of the chain corresponds to 183–210 (RILPLYRCSRWPCPNVVDCFVSRPTEKT). The chain crosses the membrane as a helical span at residues 211-231 (IFILFMLSVASVSLFLNILEM). At 232–440 (SHLGLKKIRS…SRARSDDLTV (209 aa)) the chain is on the cytoplasmic side. The tract at residues 334-440 (GAQEGVEEEQ…SRARSDDLTV (107 aa)) is disordered. Basic and acidic residues-rich tracts occupy residues 353–365 (VGDK…RVST) and 375–405 (EEEK…ELTP). A compositionally biased stretch (low complexity) spans 423–432 (LSRLSKASSR).

This sequence belongs to the connexin family. Alpha-type (group II) subfamily. In terms of assembly, a hemichannel or connexon is composed of a hexamer of connexins. A functional gap junction is formed by the apposition of two hemichannels. Forms heteromeric channels with GJA3. Detected in eye lens (at protein level). Eye lens.

The protein localises to the cell membrane. Its subcellular location is the cell junction. The protein resides in the gap junction. Functionally, structural component of eye lens gap junctions. Gap junctions are dodecameric channels that connect the cytoplasm of adjoining cells. They are formed by the docking of two hexameric hemichannels, one from each cell membrane. Small molecules and ions diffuse from one cell to a neighboring cell via the central pore. This is Gap junction alpha-8 protein (GJA8) from Ovis aries (Sheep).